The following is a 328-amino-acid chain: Malate dehydrogenase (328 aa).

11–17 contributes to the NAD(+) binding site; that stretch reads GAAGQIG. Substrate-binding residues include Arg94 and Arg100. NAD(+) is bound by residues Asn107, Gln114, and 131-133; that span reads VGN. Asn133 and Arg164 together coordinate substrate. The active-site Proton acceptor is His189.

This sequence belongs to the LDH/MDH superfamily. MDH type 2 family.

The catalysed reaction is (S)-malate + NAD(+) = oxaloacetate + NADH + H(+). Functionally, catalyzes the reversible oxidation of malate to oxaloacetate. The protein is Malate dehydrogenase of Acinetobacter baumannii (strain AB0057).